The sequence spans 89 residues: Small ribosomal subunit protein uS15 (89 aa).

This sequence belongs to the universal ribosomal protein uS15 family. Part of the 30S ribosomal subunit. Forms a bridge to the 50S subunit in the 70S ribosome, contacting the 23S rRNA.

In terms of biological role, one of the primary rRNA binding proteins, it binds directly to 16S rRNA where it helps nucleate assembly of the platform of the 30S subunit by binding and bridging several RNA helices of the 16S rRNA. Forms an intersubunit bridge (bridge B4) with the 23S rRNA of the 50S subunit in the ribosome. This is Small ribosomal subunit protein uS15 from Pelotomaculum thermopropionicum (strain DSM 13744 / JCM 10971 / SI).